The primary structure comprises 225 residues: RNA-binding protein 24 (225 aa).

Residues T11–L88 enclose the RRM domain.

It is found in the nucleus. The protein resides in the cytoplasm. In terms of biological role, multifunctional RNA-binding protein involved in the regulation of pre-mRNA splicing, mRNA stability and mRNA translation important for cell fate decision and differentiation. Plays a major role in pre-mRNA alternative splicing regulation. Mediates preferentially muscle-specific exon inclusion in numerous mRNAs important for striated cardiac and skeletal muscle cell differentiation. Binds to intronic splicing enhancer (ISE) composed of stretches of GU-rich motifs localized in flanking intron of exon that will be included by alternative splicing. Involved in embryonic stem cell (ESC) transition to cardiac cell differentiation by promoting pre-mRNA alternative splicing events of several pluripotency and/or differentiation genes. Plays a role in the regulation of mRNA stability and mRNA translation to which it is bound. Involved in myogenic differentiation by regulating MYOG levels. Binds to a huge amount of mRNAs. Involved in embryonic heart development and myogenic differentiation of somitic muscle progenitors. The protein is RNA-binding protein 24 of Gallus gallus (Chicken).